The chain runs to 417 residues: L-rhamnose isomerase (417 aa).

His261, Asp293, and Asp295 together coordinate Mn(2+).

The protein belongs to the rhamnose isomerase family. Requires Mn(2+) as cofactor.

It localises to the cytoplasm. It catalyses the reaction L-rhamnopyranose = L-rhamnulose. It participates in carbohydrate degradation; L-rhamnose degradation; glycerone phosphate from L-rhamnose: step 1/3. Catalyzes the interconversion of L-rhamnose and L-rhamnulose. The chain is L-rhamnose isomerase from Oceanobacillus iheyensis (strain DSM 14371 / CIP 107618 / JCM 11309 / KCTC 3954 / HTE831).